Consider the following 2156-residue polypeptide: Oxygen-regulated protein 1 (2156 aa).

Residues 1-19 (MSDTPSTGFSIIHPTSSEG) show a composition bias toward polar residues. The interval 1-25 (MSDTPSTGFSIIHPTSSEGQVPPPR) is disordered. Doublecortin domains follow at residues 36–118 (KRIS…VDLD) and 154–233 (RSLV…GNYD). Disordered regions lie at residues 353–375 (VSKT…RTES), 666–686 (SSVA…SRYQ), 1438–1458 (DMEE…MTSS), and 1590–1621 (DWSD…TQEK).

In terms of assembly, interacts (via the doublecortin domains) with microtubules. Interacts with RP1L1. Interacts with MAK. As to expression, expressed in retina. Not expressed in heart, brain, placenta, lung, liver, skeletal muscle, kidney, spleen and pancreas.

The protein localises to the cytoplasm. It is found in the cytoskeleton. Its subcellular location is the cilium axoneme. It localises to the cell projection. The protein resides in the cilium. The protein localises to the photoreceptor outer segment. Functionally, microtubule-associated protein regulating the stability and length of the microtubule-based axoneme of photoreceptors. Required for the differentiation of photoreceptor cells, it plays a role in the organization of the outer segment of rod and cone photoreceptors ensuring the correct orientation and higher-order stacking of outer segment disks along the photoreceptor axoneme. In Homo sapiens (Human), this protein is Oxygen-regulated protein 1 (RP1).